The primary structure comprises 173 residues: Disulfide bond formation protein B (173 aa).

Topologically, residues Met-1–Gln-11 are cytoplasmic. A helical transmembrane segment spans residues Cys-12–Phe-28. Over Leu-29–Ile-46 the chain is Periplasmic. Cys-38 and Cys-41 are disulfide-bonded. Residues Ala-47–Ser-63 traverse the membrane as a helical segment. The Cytoplasmic segment spans residues Ser-64–Lys-70. Residues Ala-71–Gly-88 traverse the membrane as a helical segment. Topologically, residues Arg-89–Met-145 are periplasmic. Cys-104 and Cys-131 are joined by a disulfide. Residues Trp-146–Lys-164 form a helical membrane-spanning segment. At Ala-165 to Ser-173 the chain is on the cytoplasmic side.

Belongs to the DsbB family.

The protein localises to the cell inner membrane. Its function is as follows. Required for disulfide bond formation in some periplasmic proteins. Acts by oxidizing the DsbA protein. In Xylella fastidiosa (strain 9a5c), this protein is Disulfide bond formation protein B.